The primary structure comprises 100 residues: Urease subunit gamma (100 aa).

It belongs to the urease gamma subunit family. In terms of assembly, heterotrimer of UreA (gamma), UreB (beta) and UreC (alpha) subunits. Three heterotrimers associate to form the active enzyme.

It is found in the cytoplasm. The enzyme catalyses urea + 2 H2O + H(+) = hydrogencarbonate + 2 NH4(+). It participates in nitrogen metabolism; urea degradation; CO(2) and NH(3) from urea (urease route): step 1/1. This Ralstonia pickettii (strain 12J) protein is Urease subunit gamma.